Consider the following 115-residue polypeptide: Large ribosomal subunit protein bL19 (115 aa).

The protein belongs to the bacterial ribosomal protein bL19 family.

This protein is located at the 30S-50S ribosomal subunit interface and may play a role in the structure and function of the aminoacyl-tRNA binding site. The sequence is that of Large ribosomal subunit protein bL19 from Nitratidesulfovibrio vulgaris (strain ATCC 29579 / DSM 644 / CCUG 34227 / NCIMB 8303 / VKM B-1760 / Hildenborough) (Desulfovibrio vulgaris).